A 122-amino-acid polypeptide reads, in one-letter code: Large ribosomal subunit protein uL14c (122 aa).

This sequence belongs to the universal ribosomal protein uL14 family. As to quaternary structure, part of the 50S ribosomal subunit.

The protein resides in the plastid. Its subcellular location is the chloroplast. Binds to 23S rRNA. The protein is Large ribosomal subunit protein uL14c of Huperzia lucidula (Shining clubmoss).